The chain runs to 237 residues: Small ribosomal subunit protein uS2c (237 aa).

Belongs to the universal ribosomal protein uS2 family.

It localises to the plastid. The protein is Small ribosomal subunit protein uS2c (rps2) of Epifagus virginiana (Beechdrops).